We begin with the raw amino-acid sequence, 420 residues long: UDP-N-acetylglucosamine 1-carboxyvinyltransferase (420 aa).

A phosphoenolpyruvate-binding site is contributed by lysine 22 to asparagine 23. Arginine 92 is a UDP-N-acetyl-alpha-D-glucosamine binding site. Cysteine 116 serves as the catalytic Proton donor. Cysteine 116 carries the 2-(S-cysteinyl)pyruvic acid O-phosphothioketal modification. UDP-N-acetyl-alpha-D-glucosamine contacts are provided by residues arginine 121–glutamine 125, aspartate 304, and isoleucine 326.

The protein belongs to the EPSP synthase family. MurA subfamily.

It localises to the cytoplasm. It carries out the reaction phosphoenolpyruvate + UDP-N-acetyl-alpha-D-glucosamine = UDP-N-acetyl-3-O-(1-carboxyvinyl)-alpha-D-glucosamine + phosphate. Its pathway is cell wall biogenesis; peptidoglycan biosynthesis. Its function is as follows. Cell wall formation. Adds enolpyruvyl to UDP-N-acetylglucosamine. This chain is UDP-N-acetylglucosamine 1-carboxyvinyltransferase, found in Paraburkholderia phymatum (strain DSM 17167 / CIP 108236 / LMG 21445 / STM815) (Burkholderia phymatum).